The following is a 292-amino-acid chain: Aspartate carbamoyltransferase catalytic subunit (292 aa).

The carbamoyl phosphate site is built by arginine 50 and threonine 51. Lysine 78 serves as a coordination point for L-aspartate. Residues arginine 100, histidine 128, and glutamine 131 each coordinate carbamoyl phosphate. L-aspartate-binding residues include arginine 161 and arginine 211. Positions 250 and 251 each coordinate carbamoyl phosphate.

It belongs to the aspartate/ornithine carbamoyltransferase superfamily. ATCase family. In terms of assembly, heterododecamer (2C3:3R2) of six catalytic PyrB chains organized as two trimers (C3), and six regulatory PyrI chains organized as three dimers (R2).

It catalyses the reaction carbamoyl phosphate + L-aspartate = N-carbamoyl-L-aspartate + phosphate + H(+). It functions in the pathway pyrimidine metabolism; UMP biosynthesis via de novo pathway; (S)-dihydroorotate from bicarbonate: step 2/3. In terms of biological role, catalyzes the condensation of carbamoyl phosphate and aspartate to form carbamoyl aspartate and inorganic phosphate, the committed step in the de novo pyrimidine nucleotide biosynthesis pathway. This chain is Aspartate carbamoyltransferase catalytic subunit, found in Nitratiruptor sp. (strain SB155-2).